We begin with the raw amino-acid sequence, 302 residues long: ICOS ligand (302 aa).

A signal peptide spans 1 to 18 (MRLGSPGLLFLLFSSLRA). The 111-residue stretch at 19–129 (DTQEKEVRAM…LGFQEVLSVE (111 aa)) folds into the Ig-like V-type domain. Residues 19 to 256 (DTQEKEVRAM…VSTGEKNAAT (238 aa)) are Extracellular-facing. The cysteines at positions 37 and 113 are disulfide-linked. Asn70, Asn137, Asn173, Asn186, and Asn225 each carry an N-linked (GlcNAc...) asparagine glycan. An Ig-like C2-type domain is found at 141–227 (PVVSAPHSPS…ENVLLQQNLT (87 aa)). Residues Cys158 and Cys216 are joined by a disulfide bond. The helical transmembrane segment at 257 to 277 (WSILAVLCLLVVVAVAIGWVC) threads the bilayer. Over 278–302 (RDRCLQHSYAGAWAVSPETELTGHV) the chain is Cytoplasmic.

This sequence belongs to the immunoglobulin superfamily. BTN/MOG family. In terms of assembly, interacts with CTLA4 (in vitro). As to expression, expressed on peripheral blood B-cells and monocytes, as well as on monocyte-derived dendritic cells (at protein level). Widely expressed (brain, heart, kidney, liver, lung, pancreas, placenta, skeletal muscle, bone marrow, colon, ovary, prostate, testis, lymph nodes, leukocytes, spleen, thymus and tonsil). In terms of tissue distribution, detected only in lymph nodes, leukocytes and spleen. Expressed on activated monocytes and dendritic cells.

It is found in the cell membrane. Functionally, ligand for the T-cell-specific cell surface receptor ICOS. Acts as a costimulatory signal for T-cell proliferation and cytokine secretion. Also induces B-cell proliferation and differentiation into plasma cells. Could play an important role in mediating local tissue responses to inflammatory conditions, as well as in modulating the secondary immune response by co-stimulating memory T-cell function. In endothelial cells, required for proper neutrophil transmigration in response to chemoattractants, such as CXCL8/IL8 or N-formyl-methionyl peptides (fMLP). This is ICOS ligand (ICOSLG) from Homo sapiens (Human).